Here is a 793-residue protein sequence, read N- to C-terminus: Phenylalanine--tRNA ligase beta subunit (793 aa).

The region spanning 40–159 (SKLNTKLVIG…MDEMVGREIS (120 aa)) is the tRNA-binding domain. In terms of domain architecture, B5 spans 401–476 (NYDNVYSITL…RLYGYDNIIE (76 aa)). Residues Asp454, Asp460, Glu463, and Glu464 each coordinate Mg(2+). Positions 701 to 793 (SKFQKSTRDI…NLKELKVKVR (93 aa)) constitute an FDX-ACB domain.

The protein belongs to the phenylalanyl-tRNA synthetase beta subunit family. Type 1 subfamily. In terms of assembly, tetramer of two alpha and two beta subunits. Requires Mg(2+) as cofactor.

Its subcellular location is the cytoplasm. The enzyme catalyses tRNA(Phe) + L-phenylalanine + ATP = L-phenylalanyl-tRNA(Phe) + AMP + diphosphate + H(+). The sequence is that of Phenylalanine--tRNA ligase beta subunit from Mesoplasma florum (strain ATCC 33453 / NBRC 100688 / NCTC 11704 / L1) (Acholeplasma florum).